Reading from the N-terminus, the 233-residue chain is Glutathione S-transferase 2 (233 aa).

Residues 17-101 (QKMIIYDTPA…YIDALDGTPT (85 aa)) form the GST N-terminal domain. Residues tyrosine 29, histidine 58, valine 72, 85–86 (EC), and histidine 133 each bind glutathione. The GST C-terminal domain occupies 106–233 (TPLEKGVIHM…KLLEIRSKSS (128 aa)).

This sequence belongs to the GST superfamily. In terms of assembly, homodimer.

The catalysed reaction is RX + glutathione = an S-substituted glutathione + a halide anion + H(+). This is Glutathione S-transferase 2 (GTT2) from Saccharomyces cerevisiae (strain ATCC 204508 / S288c) (Baker's yeast).